Consider the following 198-residue polypeptide: GTP cyclohydrolase-2 (198 aa).

GTP is bound at residue 52 to 56; sequence RMHSE. Residues cysteine 57, cysteine 68, and cysteine 70 each coordinate Zn(2+). Residues glutamine 73, 94–96, and threonine 116 contribute to the GTP site; that span reads EGR. Catalysis depends on aspartate 128, which acts as the Proton acceptor. Arginine 130 acts as the Nucleophile in catalysis. GTP contacts are provided by threonine 151 and lysine 156.

It belongs to the GTP cyclohydrolase II family. Zn(2+) serves as cofactor.

It carries out the reaction GTP + 4 H2O = 2,5-diamino-6-hydroxy-4-(5-phosphoribosylamino)-pyrimidine + formate + 2 phosphate + 3 H(+). It participates in cofactor biosynthesis; riboflavin biosynthesis; 5-amino-6-(D-ribitylamino)uracil from GTP: step 1/4. In terms of biological role, catalyzes the conversion of GTP to 2,5-diamino-6-ribosylamino-4(3H)-pyrimidinone 5'-phosphate (DARP), formate and pyrophosphate. The sequence is that of GTP cyclohydrolase-2 from Vibrio cholerae serotype O1 (strain ATCC 39315 / El Tor Inaba N16961).